Consider the following 588-residue polypeptide: MTAQTVRSLINQVEIAVSAAIDRVLPEAAGADPVVRPSEHADFQSNAALALAKRARTKPADLATAVADALRADGSTAVADVTVSGPGFLNLALADATVWTQVAARLADPRLGIDLPEQSRRTVIDYSGPNIAKEMHVGHLRTTIIGDALARVLGFLGAEVIRQNHLGDWGTQFGMLIQYLDEHPDATWHSDDLAPGTSTVSALDSLYRAARKEFDADPGFADRARARVVALQAGDEDTVARWREIVAESEVAFRQIYDRLGVLLEPSDSAGESFYNDRLLDIVDELTAAGIAQDSEGALVVLSQEVTGPDGDPATLMVRKTDGGYGYDTTDLATIRYRIRDLHADRLLYVVDARQALHFRLVFETARRAGWLTDAVDVAHVAFGTVLGPDGRPFKTRAGDTVKLMDLLDAATGKARATVAEKDHALTDDDLDHIAEAAGIGAVKYADLSTSRTKDYVFDVDRMVSFDGNTGVYLQYAHTRIQSILRKAGDMTATVDVALALHPAERALALQLDAFGGALTEVARLLEPHRLCNYLYELARAFTDFYEACPVLQADPSTRANRLALCHLTARTLRQGLDLLGIAAPERM.

The short motif at 129-139 (PNIAKEMHVGH) is the 'HIGH' region element.

This sequence belongs to the class-I aminoacyl-tRNA synthetase family. In terms of assembly, monomer.

It localises to the cytoplasm. It catalyses the reaction tRNA(Arg) + L-arginine + ATP = L-arginyl-tRNA(Arg) + AMP + diphosphate. The polypeptide is Arginine--tRNA ligase (Frankia casuarinae (strain DSM 45818 / CECT 9043 / HFP020203 / CcI3)).